Here is a 529-residue protein sequence, read N- to C-terminus: Nuclear protein localization protein 4 homolog 1 (529 aa).

The MPN domain maps to isoleucine 129–tyrosine 266. A RanBP2-type zinc finger spans residues serine 499–aspartate 529.

Belongs to the NPL4 family. As to quaternary structure, forms a complex composed of ubxn-3, ufd-1, npl-4.1 and cdc-48.1; within the complex, interacts with ufd-1 and ubxn-3. Interacts with ufd-1. Interacts with elc-1/elongin C; the interaction may mediate the interaction between the npl-4-ufd-1-cdc-48 complex and the E3 ubiquitin ligase cul-2 complex.

Its subcellular location is the cytoplasm. It is found in the nucleus. In association with ufd-1 and ATPase cdc-48.1 and/or cdc-48.2, involved in the cytoplasmic elimination of misfolded proteins exported from the ER. This pathway, known as ERAD, prevents the activation of the unfolded protein response (UPR) caused by the accumulation of misfolded proteins in the ER. During S phase and in association with ufd-1, cdc-48.1 and/or cdc-48.2 and ubxn-3, ensures the degradation of DNA licensing factor cdt-1 after the initiation of DNA replication and thus the disassembly of the DNA replication CGM helicase complex by promoting the dissociation from chromatin of several of its components including cdc-45 and sld-5. Regulates ubxn-3 nuclear localization during S phase. The sequence is that of Nuclear protein localization protein 4 homolog 1 from Caenorhabditis elegans.